The sequence spans 130 residues: Small ribosomal subunit protein uS8 (130 aa).

This sequence belongs to the universal ribosomal protein uS8 family. Part of the 30S ribosomal subunit.

In terms of biological role, one of the primary rRNA binding proteins, it binds directly to 16S rRNA central domain where it helps coordinate assembly of the platform of the 30S subunit. This Halobacterium salinarum (strain ATCC 29341 / DSM 671 / R1) protein is Small ribosomal subunit protein uS8.